The sequence spans 169 residues: Allophycocyanin subunit beta-18 (169 aa).

Asn72 is modified (N4-methylasparagine). A (2R,3E)-phycocyanobilin-binding site is contributed by Cys82.

Belongs to the phycobiliprotein family. As to quaternary structure, heterodimer of ApcE and this beta chain. Contains one covalently linked bilin chromophore.

The protein localises to the cellular thylakoid membrane. In terms of biological role, a variant beta-allophycocyanin (AP) which forms a complex with ApcE, a phycobilisome terminal emitter that influences energy transfer to photosystem II. The polypeptide is Allophycocyanin subunit beta-18 (apcF) (Synechocystis sp. (strain ATCC 27184 / PCC 6803 / Kazusa)).